We begin with the raw amino-acid sequence, 237 residues long: MISAQACGANGKMKDYHYSGPVEHKFSPYAFNGGTVLAVAGEDFALVASDTRLSEGYSIHSRDSPKCYKLTDTTVIGCSGFHGDCLTLTKIIEARLKMYKHSNNKSMTSGAIAAMLSTILYGRRFFPYYVYNIIGGLDEEGRGAVYSFDPVGSYQRDTYKAGGSASAMLQPLLDNQIGFKNMENVEQVPLSQEKAVQLVKDVFISAAERDVYTGDALKICIITKEGIREEIVPLRKD.

Belongs to the peptidase T1B family. The 26S proteasome consists of a 20S proteasome core and two 19S regulatory subunits. The 20S proteasome core is composed of 28 subunits that are arranged in four stacked rings, resulting in a barrel-shaped structure. The two end rings are each formed by seven alpha subunits, and the two central rings are each formed by seven beta subunits. The catalytic chamber with the active sites is on the inside of the barrel.

It localises to the cytoplasm. It is found in the nucleus. Its function is as follows. Non-catalytic component of the proteasome, a multicatalytic proteinase complex which is characterized by its ability to cleave peptides with Arg, Phe, Tyr, Leu, and Glu adjacent to the leaving group at neutral or slightly basic pH. The proteasome has an ATP-dependent proteolytic activity. The chain is Proteasome subunit beta type-1-B (psmb1-B) from Carassius auratus (Goldfish).